The sequence spans 158 residues: UPF0262 protein RSKD131_1985 (158 aa).

It belongs to the UPF0262 family.

The polypeptide is UPF0262 protein RSKD131_1985 (Cereibacter sphaeroides (strain KD131 / KCTC 12085) (Rhodobacter sphaeroides)).